Consider the following 133-residue polypeptide: Nucleoside diphosphate kinase (133 aa).

ATP contacts are provided by Lys9, Phe57, Arg85, Thr91, Arg102, and Asn112. The Pros-phosphohistidine intermediate role is filled by His115.

Belongs to the NDK family. Homotetramer. Requires Mg(2+) as cofactor.

It is found in the cytoplasm. It catalyses the reaction a 2'-deoxyribonucleoside 5'-diphosphate + ATP = a 2'-deoxyribonucleoside 5'-triphosphate + ADP. The enzyme catalyses a ribonucleoside 5'-diphosphate + ATP = a ribonucleoside 5'-triphosphate + ADP. In terms of biological role, major role in the synthesis of nucleoside triphosphates other than ATP. The ATP gamma phosphate is transferred to the NDP beta phosphate via a ping-pong mechanism, using a phosphorylated active-site intermediate. This Rubrobacter xylanophilus (strain DSM 9941 / JCM 11954 / NBRC 16129 / PRD-1) protein is Nucleoside diphosphate kinase.